The primary structure comprises 87 residues: Acyl-CoA-binding protein 2 (87 aa).

The region spanning 2–87 is the ACB domain; the sequence is VSQLFEEKAK…VDNLIAKYSS (86 aa). An acyl-CoA-binding positions include 29 to 33, K51, K55, and Y74; that span reads YGLYK.

Belongs to the ACBP family.

Its function is as follows. Binds medium- and long-chain acyl-CoA esters with very high affinity and may function as an intracellular carrier of acyl-CoA esters. This is Acyl-CoA-binding protein 2 (ACB2) from Saccharomyces pastorianus (strain ATCC 76670 / Carlsberg bottom yeast no.2 / CBS 1503 / CLIB 180 / NBRC 10610 / NRRL Y-1525) (Saaz-type lager yeast).